Reading from the N-terminus, the 169-residue chain is MGLKYFAHLPLELREKIVRDHLQEERKKEFLEKAIEDSCRRHEALLIEDPSPAELNSLSKFLTALSDYVGNQFNTRCLIRWKKDVPSKVKFGFMDEQHHKLYGSMDMDDLSCGELFIPDEEDDLTYEDGVIVRCSQLDQLFKSLGIEIVYIVVSKHCIWAPLSKEIVIK.

The binding to host SKP1 protein stretch occupies residues 9-22; it reads LPLELREKIVRDHL. The LXCXE motif, interaction with host RBR signature appears at 110–114; that stretch reads LSCGE.

This sequence belongs to the nanovirus Clink protein family. In terms of assembly, interacts with host SKP1. Interacts (via LXCXE domain) with host retinoblastoma-related protein 1 (RBR1). Interacts (via LXCXE domain) with retinoblastoma-related proteins (RBR).

Its function is as follows. Interacts with and disrupts the function of host retinoblastoma-related proteins RBR, which are key regulators of the cell cycle. Induces transcriptional activation of E2F-regulated S-phase and G2/M-phase-specific genes. Inactivation of the ability of RBR to arrest the cell cycle leads to the stimulation of viral DNA replication. In Astragalus sinicus (Chinese milk vetch), this protein is Cell cycle link protein (DNA-C).